The following is a 544-amino-acid chain: Aspartokinase (544 aa).

Residues leucine 463–aspartate 535 enclose the ACT domain.

The protein belongs to the aspartokinase family.

It catalyses the reaction L-aspartate + ATP = 4-phospho-L-aspartate + ADP. Its pathway is amino-acid biosynthesis; L-methionine biosynthesis via de novo pathway; L-homoserine from L-aspartate: step 1/3. The protein operates within amino-acid biosynthesis; L-threonine biosynthesis; L-threonine from L-aspartate: step 1/5. Its function is as follows. Phosphorylates aspartate, the first step in the biosynthesis of amino acids that derive from aspartate (the aspartate family of amino acids), including methioinine and threonine, the latter of which is a precursor to isoleucine. The chain is Aspartokinase from Candida albicans (strain SC5314 / ATCC MYA-2876) (Yeast).